Here is a 67-residue protein sequence, read N- to C-terminus: Amphipathic peptide Tx348 (67 aa).

A signal peptide spans 1–23 (MKSQAFFLLFLVVLLLATTQSEA). Position 33 is a phenylalanine amide (phenylalanine 33). Positions 37 to 67 (SMRNMDTMKYLYDPSLSAADLKTLQKLMENY) are excised as a propeptide.

It belongs to the non-disulfide-bridged peptide (NDBP) superfamily. Short antimicrobial peptide (group 4) family. Expressed by the venom gland.

Its subcellular location is the secreted. It localises to the target cell membrane. Amphipathic peptide that has antibacterial activities. The chain is Amphipathic peptide Tx348 from Buthus israelis (Israeli scorpion).